The primary structure comprises 78 residues: Putative defensin-like protein 133 (78 aa).

A signal peptide spans 1–24 (MKRSFLLLLTILTIFIILGQGVMG). Intrachain disulfides connect cysteine 34–cysteine 75, cysteine 44–cysteine 68, cysteine 49–cysteine 72, and cysteine 53–cysteine 74.

Belongs to the DEFL family.

The protein resides in the secreted. This Arabidopsis thaliana (Mouse-ear cress) protein is Putative defensin-like protein 133 (LCR33).